We begin with the raw amino-acid sequence, 358 residues long: uncharacterized protein (358 aa).

The protein belongs to the methyltransferase superfamily.

This is an uncharacterized protein from Mycobacterium tuberculosis (strain CDC 1551 / Oshkosh).